The sequence spans 474 residues: Ribulose bisphosphate carboxylase large chain (474 aa).

The substrate site is built by Asn117 and Thr167. Lys169 functions as the Proton acceptor in the catalytic mechanism. Lys171 is a substrate binding site. Mg(2+) contacts are provided by Lys195, Asp197, and Glu198. Lys195 carries the N6-carboxylysine modification. The active-site Proton acceptor is the His288. Residues Arg289, His321, and Ser373 each contribute to the substrate site.

It belongs to the RuBisCO large chain family. Type I subfamily. Heterohexadecamer of 8 large chains and 8 small chains. Mg(2+) is required as a cofactor.

The catalysed reaction is 2 (2R)-3-phosphoglycerate + 2 H(+) = D-ribulose 1,5-bisphosphate + CO2 + H2O. It catalyses the reaction D-ribulose 1,5-bisphosphate + O2 = 2-phosphoglycolate + (2R)-3-phosphoglycerate + 2 H(+). Functionally, ruBisCO catalyzes two reactions: the carboxylation of D-ribulose 1,5-bisphosphate, the primary event in carbon dioxide fixation, as well as the oxidative fragmentation of the pentose substrate. Both reactions occur simultaneously and in competition at the same active site. This Hydrogenophilus thermoluteolus (Pseudomonas hydrogenothermophila) protein is Ribulose bisphosphate carboxylase large chain.